A 225-amino-acid polypeptide reads, in one-letter code: MTTAAIIVAAGRGTRAGGDLPKQWQPLAGRPVLAHTLAAFRAAAGVSRTLLVIHPDDRARAEALPGVAEGKVELVEGGASRDASVRNALEALAGAGIERVLIHDGARPLVAPGLIARTLAALETAPGAAPAVPVSDALWRGEGGRVVGTQDRTGLFRAQTPQAFRYEAILAAHRAHPGGAADDVEVARAAGLEVAIVEGCEDNLKVTYPGDFARAERLLALAAGL.

The protein belongs to the IspD/TarI cytidylyltransferase family. IspD subfamily.

It catalyses the reaction 2-C-methyl-D-erythritol 4-phosphate + CTP + H(+) = 4-CDP-2-C-methyl-D-erythritol + diphosphate. It participates in isoprenoid biosynthesis; isopentenyl diphosphate biosynthesis via DXP pathway; isopentenyl diphosphate from 1-deoxy-D-xylulose 5-phosphate: step 2/6. In terms of biological role, catalyzes the formation of 4-diphosphocytidyl-2-C-methyl-D-erythritol from CTP and 2-C-methyl-D-erythritol 4-phosphate (MEP). The protein is 2-C-methyl-D-erythritol 4-phosphate cytidylyltransferase of Cereibacter sphaeroides (strain ATCC 17029 / ATH 2.4.9) (Rhodobacter sphaeroides).